An 861-amino-acid chain; its full sequence is Glucans biosynthesis glucosyltransferase H (861 aa).

Disordered stretches follow at residues 65–89 (RLSAREPAKGETPEPGGSTYGSVGR) and 101–129 (AGEPLLKRRPDGTVHVDTGPEPQRSSMVP). Basic and acidic residues-rich tracts occupy residues 67-76 (SAREPAKGET) and 105-114 (LLKRRPDGTV). 6 helical membrane passes run 181–201 (FLLGLVVAQTTLATYFMTKVL), 208–228 (LLEIAILVLFAVLFSWVSAGF), 532–552 (VFLTGIMAYLSAPLWFLFLLL), 589–609 (LFSATATLLFLPKVASILLLV), 616–636 (GGLPRLVMSMLIEVVLSALLA), and 698–718 (FVLWLLPIVGSLALSIPLSVM).

Belongs to the glycosyltransferase 2 family. OpgH subfamily.

Its subcellular location is the cell inner membrane. It functions in the pathway glycan metabolism; osmoregulated periplasmic glucan (OPG) biosynthesis. In terms of biological role, involved in the biosynthesis of osmoregulated periplasmic glucans (OPGs). The protein is Glucans biosynthesis glucosyltransferase H of Cupriavidus pinatubonensis (strain JMP 134 / LMG 1197) (Cupriavidus necator (strain JMP 134)).